The primary structure comprises 720 residues: ATP-dependent DNA helicase Hel308 (720 aa).

Residues Ser-23, Gln-28, and 46-53 (IPTASGKT) contribute to the ATP site. Residues 33 to 197 (KSGILEGKNA…WLNAELIVSD (165 aa)) form the Helicase ATP-binding domain. The DEAH box signature appears at 145–148 (DEIH). In terms of domain architecture, Helicase C-terminal spans 229–422 (LVYDAIRKKK…NLRSQVLALI (194 aa)).

It belongs to the helicase family. Hel308 subfamily. In terms of assembly, monomer. Interacts with PCNA. Mg(2+) serves as cofactor. The cofactor is Zn(2+).

The enzyme catalyses Couples ATP hydrolysis with the unwinding of duplex DNA by translocating in the 3'-5' direction.. It catalyses the reaction ATP + H2O = ADP + phosphate + H(+). Its function is as follows. DNA-dependent ATPase and 3'-5' DNA helicase that may be involved in repair of stalled replication forks. Unwinds the lagging strand from forked DNA structures in a 3'-5' direction. PCNA, the DNA polymerase sliding clamp subunit, stimulates the helicase activity, and may alter substrate specificity. Unwinds branched DNA (Holliday junctions) in an ATP-dependent fashion; ss- and dsDNA stimulate ATPase to the greatest extent, although it preferentially binds DNA with a single-stranded region. Processes a RecA-mediated recombination intermediate between gapped circular and homologous linear dsDNA. This Pyrococcus furiosus (strain ATCC 43587 / DSM 3638 / JCM 8422 / Vc1) protein is ATP-dependent DNA helicase Hel308.